Consider the following 54-residue polypeptide: Ovomucoid (54 aa).

The Kazal-like domain occupies 4 to 54 (VDCSDYPKPVCTLDYMPLCGSDNKTYSNKCNFCNAVVDSNGTITLSHFGRC). Cystine bridges form between Cys-6/Cys-36, Cys-14/Cys-33, and Cys-22/Cys-54. The N-linked (GlcNAc...) asparagine glycan is linked to Asn-43.

The protein localises to the secreted. This Coloeus monedula (Eurasian jackdaw) protein is Ovomucoid.